Consider the following 131-residue polypeptide: Transcriptional activatory protein CaiF (131 aa).

Its function is as follows. Potential transcriptional activator of carnitine metabolism. This is Transcriptional activatory protein CaiF (caiF) from Escherichia coli (strain K12).